A 383-amino-acid polypeptide reads, in one-letter code: Aquaporin-5 (383 aa).

At 1–46 (MSVTTLNGQPTLNISGPGQTALSRLDPLKKVFTKFFSSIPQKVRGH) the chain is on the cytoplasmic side. Residues 47–67 (VVAVIGELIGTTAFLFIAFSA) traverse the membrane as a helical segment. The Extracellular portion of the chain corresponds to 68–93 (AEVALASANDNKGDKVSYETKSISTT). Residues 94 to 114 (QILFIAFGAGISLVVNAWTFF) form a helical membrane-spanning segment. Position 115 (Arg-115) is a topological domain, cytoplasmic. Residues 116 to 136 (ISGGLFDPAVSIALFFVGAID) traverse the membrane as a helical segment. An NPA 1 motif is present at residues 122–124 (DPA). The Extracellular segment spans residues 137–140 (LTRC). Residues 141-161 (VLLCIAQCLGAIAASAMAYGL) traverse the membrane as a helical segment. Over 162–180 (YHGGLHTATTLKPGMSPAQ) the chain is Cytoplasmic. The helical transmembrane segment at 181-201 (GVIVEMILTCQLCFTVLMLAA) threads the bilayer. Residues 202-207 (EKHEAT) lie on the Extracellular side of the membrane. Residues 208 to 228 (FLAPLGIGLSVFIGELAGVFW) form a helical membrane-spanning segment. Residues 229–252 (TGGSMNPARSLGPAVVTLSFPSYH) lie on the Cytoplasmic side of the membrane. An NPA 2 motif is present at residues 234 to 236 (NPA). Residues 253 to 273 (WIYWVGPIAGAGLASIIYKLI) form a helical membrane-spanning segment. Over 274 to 383 (KALEYETAQL…DGFFGEMYAD (110 aa)) the chain is Extracellular. A compositionally biased stretch (polar residues) spans 332–349 (ARKSSSLVPTKSTKSGNS). The interval 332 to 383 (ARKSSSLVPTKSTKSGNSEVKKTETVVEEPAKTQPKPAPAADDGFFGEMYAD) is disordered. Positions 350–362 (EVKKTETVVEEPA) are enriched in basic and acidic residues. Residues 363–372 (KTQPKPAPAA) show a composition bias toward low complexity.

The protein belongs to the MIP/aquaporin (TC 1.A.8) family.

The protein resides in the membrane. The enzyme catalyses H2O(in) = H2O(out). In terms of biological role, water channel required to facilitate the transport of water across membranes. May play a role in the vegetative growth. This Botryotinia fuckeliana (strain B05.10) (Noble rot fungus) protein is Aquaporin-5.